Consider the following 575-residue polypeptide: TOX high mobility group box family member 3 (575 aa).

2 disordered regions span residues 189-258 and 516-575; these read LGGA…QKPV and QQLQ…VSIF. Residues 195–214 are compositionally biased toward low complexity; the sequence is SHTSPSPPASKSATPSPSSS. The span at 222–238 shows a compositional bias: basic and acidic residues; that stretch reads DANRAIGEKRTAPDSGK. Over residues 239–249 the composition is skewed to basic residues; sequence KPKTPKKKKKK. Residues 254–322 constitute a DNA-binding region (HMG box); sequence PQKPVSAYAL…EYLKALAAYR (69 aa). Residues 516–526 are compositionally biased toward low complexity; it reads QQLQHMQHQSQ. Polar residues predominate over residues 527–541; sequence PSPRQHSPVTSQITS. Positions 548–575 are enriched in low complexity; sequence SPQPASQQHQPQIQSQTQTQVLPQVSIF.

Homodimer. Interacts (via HGM box) with CITED1 (via C-terminus); the interaction increases estrogen-response element (ERE)-dependent transcription and protection against cell death. Interacts with CREB1 (phosphorylated form). Interacts with CREB1; the interaction is not depolarization dependent. Interacts with CREBBP (via C-terminus).

It is found in the nucleus. Its function is as follows. Transcriptional coactivator of the p300/CBP-mediated transcription complex. Activates transactivation through cAMP response element (CRE) sites. Protects against cell death by inducing antiapoptotic and repressing pro-apoptotic transcripts. Stimulates transcription from the estrogen-responsive or BCL-2 promoters. Required for depolarization-induced transcription activation of the C-FOS promoter in neurons. Associates with chromatin to the estrogen-responsive C3 promoter region. The polypeptide is TOX high mobility group box family member 3 (Tox3) (Mus musculus (Mouse)).